Here is a 703-residue protein sequence, read N- to C-terminus: Polyribonucleotide nucleotidyltransferase (703 aa).

2 residues coordinate Mg(2+): D482 and D488. Residues 549-607 (PKAQVMKIPEDKVGLVIGPAGKNIKYIKEQFGASVWIDGANAYINAPTIEAVNKAADFI) enclose the KH domain. The S1 motif domain maps to 617 to 679 (GGVYEGKVIR…EQNRLNLCSP (63 aa)). The tract at residues 677 to 703 (CSPDYQKPENQERPRKEQLNRKPHHRK) is disordered. Residues 682-696 (QKPENQERPRKEQLN) show a composition bias toward basic and acidic residues.

This sequence belongs to the polyribonucleotide nucleotidyltransferase family. The cofactor is Mg(2+).

It is found in the cytoplasm. The enzyme catalyses RNA(n+1) + phosphate = RNA(n) + a ribonucleoside 5'-diphosphate. Its function is as follows. Involved in mRNA degradation. Catalyzes the phosphorolysis of single-stranded polyribonucleotides processively in the 3'- to 5'-direction. This is Polyribonucleotide nucleotidyltransferase from Hydrogenobaculum sp. (strain Y04AAS1).